The following is a 96-amino-acid chain: Dynein light chain roadblock-type 2 (96 aa).

Position 2 is an N-acetylalanine (Ala2).

This sequence belongs to the GAMAD family. In terms of assembly, homodimer. The cytoplasmic dynein 1 complex consists of two catalytic heavy chains (HCs) and a number of non-catalytic subunits presented by intermediate chains (ICs), light intermediate chains (LICs) and light chains (LCs); the composition seems to vary in respect to the IC, LIC and LC composition. The heavy chain homodimer serves as a scaffold for the probable homodimeric assembly of the respective non-catalytic subunits. The ICs and LICs bind directly to the HC dimer and the LCs assemble on the IC dimer. Interacts with DYNC1I1 and DYNC1I2. Self-associates. Interacts with DYNLRB1. High expression in heart, brain, placenta, skeletal muscle, prostate and small intestine; moderate in kidney, pancreas, spleen, testis, ovary and colon; low in lung, liver, thymus and leukocyte.

It is found in the cytoplasm. The protein resides in the cytoskeleton. Acts as one of several non-catalytic accessory components of the cytoplasmic dynein 1 complex that are thought to be involved in linking dynein to cargos and to adapter proteins that regulate dynein function. Cytoplasmic dynein 1 acts as a motor for the intracellular retrograde motility of vesicles and organelles along microtubules. This Homo sapiens (Human) protein is Dynein light chain roadblock-type 2 (DYNLRB2).